Consider the following 821-residue polypeptide: uncharacterized protein (821 aa).

10 disordered regions span residues 1-20, 55-96, 134-205, 240-263, 274-293, 360-381, 430-450, 467-497, 512-535, and 549-641; these read MGQT…TTSS, SENY…EAYS, SYDF…NNEH, RLHQ…RSSW, PEEF…TPLN, NVLQ…ESNS, TSED…NESR, EFST…SQAF, RNLF…NQPT, and AQEP…SNQT. 2 stretches are compositionally biased toward polar residues: residues 58–88 and 185–203; these read YADT…CSTQ and SLPS…SINN. Over residues 279-293 the composition is skewed to polar residues; the sequence is NASNPEAHSNFTPLN. Residues 437 to 450 are compositionally biased toward polar residues; the sequence is TMTQENQSLHNESR. 2 stretches are compositionally biased toward low complexity: residues 517-529 and 568-578; these read TSNS…SSFS and SSLLDSSNSNS. The span at 579–622 shows a compositional bias: polar residues; the sequence is QRPFSTVPSESNVFSRNASGNFSMSQTHQPTTDNTSSFSTQPGR. The segment at 766–809 adopts an RING-type; atypical zinc-finger fold; the sequence is CLICLETYTNGDICRKLQACKHFFHQACIDQWLTTGNNSCPLCR.

This is an uncharacterized protein from Schizosaccharomyces pombe (strain 972 / ATCC 24843) (Fission yeast).